The primary structure comprises 189 residues: Peptidyl-tRNA hydrolase (189 aa).

Residue Tyr-15 participates in tRNA binding. Catalysis depends on His-20, which acts as the Proton acceptor. Positions 66, 68, and 114 each coordinate tRNA.

Belongs to the PTH family. In terms of assembly, monomer.

The protein resides in the cytoplasm. It carries out the reaction an N-acyl-L-alpha-aminoacyl-tRNA + H2O = an N-acyl-L-amino acid + a tRNA + H(+). Hydrolyzes ribosome-free peptidyl-tRNAs (with 1 or more amino acids incorporated), which drop off the ribosome during protein synthesis, or as a result of ribosome stalling. Functionally, catalyzes the release of premature peptidyl moieties from peptidyl-tRNA molecules trapped in stalled 50S ribosomal subunits, and thus maintains levels of free tRNAs and 50S ribosomes. The sequence is that of Peptidyl-tRNA hydrolase from Streptococcus pyogenes serotype M1.